The primary structure comprises 99 residues: Integration host factor subunit alpha (99 aa).

This sequence belongs to the bacterial histone-like protein family. As to quaternary structure, heterodimer of an alpha and a beta chain.

This protein is one of the two subunits of integration host factor, a specific DNA-binding protein that functions in genetic recombination as well as in transcriptional and translational control. The polypeptide is Integration host factor subunit alpha (Anaeromyxobacter sp. (strain Fw109-5)).